The primary structure comprises 461 residues: Cysteine--tRNA ligase (461 aa).

Residue C28 coordinates Zn(2+). The 'HIGH' region signature appears at 30–40; that stretch reads ITIYDLCHIGH. Zn(2+)-binding residues include C209, H234, and E238. Positions 266–270 match the 'KMSKS' region motif; sequence KMSKS. K269 serves as a coordination point for ATP.

This sequence belongs to the class-I aminoacyl-tRNA synthetase family. In terms of assembly, monomer. It depends on Zn(2+) as a cofactor.

It localises to the cytoplasm. It carries out the reaction tRNA(Cys) + L-cysteine + ATP = L-cysteinyl-tRNA(Cys) + AMP + diphosphate. The protein is Cysteine--tRNA ligase of Yersinia pseudotuberculosis serotype IB (strain PB1/+).